The chain runs to 391 residues: MFDWVGLLLKVLYYYGQIIGLINFEIDWQRGRVVAAQRGILFAIAINVLICMVLLLQISKKFNLDVYFGRANQLHQYVIIVMVSLRMASGISAILNRWRQRAQLMRLVECVLRLFLKKPHVKQMSRWAILVKFSVGVVSNFLQMAISMESLDRLGFNEFVGMASDFWMSAIINMAISQHYLVILFVRAYYHLLKTEVRQAIHESQMLSEIYPRRAAFMTKCCYLADRIDNIAKLQNQLQSIVTQLNQVFGIQGIMVYGGYYIFSVATTYITYSLAINGIEELHLSVRAAALVFSWFLFYYTSAILNLFVMLKLFDDHKEMERILEERTLFTSALDVRLEQSFESIQLQLIRNPLKIEVLDIFTITRSSSAAMIGSIITNSIFLIQYDMEYF.

Residues methionine 1–aspartate 3 are Cytoplasmic-facing. The chain crosses the membrane as a helical span at residues tryptophan 4–phenylalanine 24. Residues glutamate 25–arginine 38 are Extracellular-facing. A helical membrane pass occupies residues glycine 39–serine 59. At lysine 60–glutamine 73 the chain is on the cytoplasmic side. A helical membrane pass occupies residues leucine 74–isoleucine 94. At leucine 95–arginine 126 the chain is on the extracellular side. The helical transmembrane segment at tryptophan 127 to serine 147 threads the bilayer. Topologically, residues methionine 148–aspartate 165 are cytoplasmic. The helical transmembrane segment at phenylalanine 166–valine 186 threads the bilayer. The Extracellular portion of the chain corresponds to arginine 187–glutamine 247. A helical membrane pass occupies residues valine 248–threonine 268. At tyrosine 269–alanine 290 the chain is on the cytoplasmic side. A helical transmembrane segment spans residues leucine 291–leucine 311. Residues lysine 312–phenylalanine 391 lie on the Extracellular side of the membrane.

It belongs to the insect chemoreceptor superfamily. Gustatory receptor (GR) family. Gr22e subfamily.

The protein resides in the cell membrane. Probable gustatory receptor which mediates acceptance or avoidance behavior, depending on its substrates. The sequence is that of Putative gustatory receptor 36a (Gr36a) from Drosophila melanogaster (Fruit fly).